Reading from the N-terminus, the 125-residue chain is Acidic phospholipase A2 6 (125 aa).

A signal peptide is located at residue S1. A propeptide spanning residues 2–7 (NRPMPL) is cleaved from the precursor. 7 cysteine pairs are disulfide-bonded: C18/C77, C33/C124, C35/C50, C49/C105, C56/C98, C66/C91, and C84/C96. D30 lines the Zn(2+) pocket. Positions 34 and 36 each coordinate Ca(2+). The active site involves H53. Ca(2+) is bound at residue D54. D99 is an active-site residue.

As to quaternary structure, heterodimer formed between isoform 5 and isoform 6 in presence of zinc ion and monomer in absence of zinc ion. Ca(2+) serves as cofactor. In terms of tissue distribution, expressed by the venom gland.

It localises to the secreted. It catalyses the reaction a 1,2-diacyl-sn-glycero-3-phosphocholine + H2O = a 1-acyl-sn-glycero-3-phosphocholine + a fatty acid + H(+). In terms of biological role, PLA2 catalyzes the calcium-dependent hydrolysis of the 2-acyl groups in 3-sn-phosphoglycerides. This Naja sagittifera (Andaman cobra) protein is Acidic phospholipase A2 6.